A 62-amino-acid polypeptide reads, in one-letter code: Delta-theraphotoxin-Cg1a 3 (62 aa).

An N-terminal signal peptide occupies residues methionine 1 to alanine 21. A propeptide spanning residues threonine 22 to arginine 29 is cleaved from the precursor. Intrachain disulfides connect cysteine 31/cysteine 46, cysteine 38/cysteine 51, and cysteine 45/cysteine 58.

This sequence belongs to the neurotoxin 10 (Hwtx-1) family. 33 (Jztx-1) subfamily. As to expression, expressed by the venom gland.

The protein resides in the secreted. Its function is as follows. Moderately inhibits voltage-gated sodium channels and weakly inhibits voltage-gated potassium channel. Inhibits the inactivation of rat Nav1.2/SCN2A (IC(50)=870 nM), rat Nav1.3/SCN3A (IC(50)=845 nM), rat Nav1.4/SCN4A (IC(50)=339 nM), human Nav1.5/SCN5A (IC(50)=335 nM) and human Nav1.7/SCN9A sodium channels (IC(50)=348 nM). The toxin delays the inactivation of sodium channels without affecting the activation and steady-state inactivation kinetics in the physiological range of voltages. Site-directed mutagenesis of the sodium channel indicates that the toxin interacts with site 3 located at the extracellular S3-S4 linker of domain IV. On potassium channels, it inhibits activation of channels with an IC(50) of 8.05 uM through a voltage sensor-trapping mechanism. It increases muscle contraction in several assays (mouse phrenic nerve-diaphragm, toad heart, rat vas deferens) and is suggested to act both presynaptically and postsynaptically. In Chilobrachys guangxiensis (Chinese earth tiger tarantula), this protein is Delta-theraphotoxin-Cg1a 3.